The following is a 473-amino-acid chain: Aspartyl/glutamyl-tRNA(Asn/Gln) amidotransferase subunit B (473 aa).

This sequence belongs to the GatB/GatE family. GatB subfamily. Heterotrimer of A, B and C subunits.

The enzyme catalyses L-glutamyl-tRNA(Gln) + L-glutamine + ATP + H2O = L-glutaminyl-tRNA(Gln) + L-glutamate + ADP + phosphate + H(+). It catalyses the reaction L-aspartyl-tRNA(Asn) + L-glutamine + ATP + H2O = L-asparaginyl-tRNA(Asn) + L-glutamate + ADP + phosphate + 2 H(+). Its function is as follows. Allows the formation of correctly charged Asn-tRNA(Asn) or Gln-tRNA(Gln) through the transamidation of misacylated Asp-tRNA(Asn) or Glu-tRNA(Gln) in organisms which lack either or both of asparaginyl-tRNA or glutaminyl-tRNA synthetases. The reaction takes place in the presence of glutamine and ATP through an activated phospho-Asp-tRNA(Asn) or phospho-Glu-tRNA(Gln). This Sulfurisphaera tokodaii (strain DSM 16993 / JCM 10545 / NBRC 100140 / 7) (Sulfolobus tokodaii) protein is Aspartyl/glutamyl-tRNA(Asn/Gln) amidotransferase subunit B.